Reading from the N-terminus, the 89-residue chain is Ragulator complex protein LAMTOR5 homolog (89 aa).

It belongs to the LAMTOR5 family. In terms of assembly, part of the Ragulator complex.

Its subcellular location is the cytoplasm. The protein localises to the lysosome. In terms of biological role, regulator of the TOR pathway, a signaling cascade that promotes cell growth in response to growth factors, energy levels, and amino acids. As part of the Ragulator complex, may activate the TOR signaling cascade in response to amino acids. This Dictyostelium discoideum (Social amoeba) protein is Ragulator complex protein LAMTOR5 homolog.